The primary structure comprises 325 residues: CRISPR-associated endonuclease Cas1 2 (325 aa).

Mn(2+) is bound by residues glutamate 145, histidine 212, and aspartate 225. Residues 283-325 form a disordered region; it reads EEEDPVEEDPTRPGGLWDLEGEVEGGVAYGGDDPGEGAEEPEG. Acidic residues predominate over residues 315–325; that stretch reads DPGEGAEEPEG.

It belongs to the CRISPR-associated endonuclease Cas1 family. As to quaternary structure, homodimer, forms a heterotetramer with a Cas2 homodimer. It depends on Mg(2+) as a cofactor. Requires Mn(2+) as cofactor.

In terms of biological role, CRISPR (clustered regularly interspaced short palindromic repeat), is an adaptive immune system that provides protection against mobile genetic elements (viruses, transposable elements and conjugative plasmids). CRISPR clusters contain spacers, sequences complementary to antecedent mobile elements, and target invading nucleic acids. CRISPR clusters are transcribed and processed into CRISPR RNA (crRNA). Acts as a dsDNA endonuclease. Involved in the integration of spacer DNA into the CRISPR cassette. This is CRISPR-associated endonuclease Cas1 2 from Thermus thermophilus (strain ATCC 27634 / DSM 579 / HB8).